Reading from the N-terminus, the 364-residue chain is Anionic peroxidase (364 aa).

Residues Met-1–Ala-20 form the signal peptide. Residues Gly-21–Gly-66 constitute a propeptide that is removed on maturation. His-99 (proton acceptor) is an active-site residue. Ca(2+) contacts are provided by Asp-100, Val-103, Gly-105, and Asp-107. A disulfide bridge connects residues Cys-101 and Cys-106. 4 N-linked (GlcNAc...) asparagine glycosylation sites follow: Asn-113, Asn-188, Asn-202, and Asn-216. Disulfide bonds link Cys-155–Cys-343 and Cys-234–Cys-255. Residue His-227 coordinates heme b. Thr-228 provides a ligand contact to Ca(2+). Asn-254 and Asn-260 each carry an N-linked (GlcNAc...) asparagine glycan. 3 residues coordinate Ca(2+): Asp-268, Thr-270, and Asp-275. An N-linked (GlcNAc...) asparagine glycan is attached at Asn-299.

It belongs to the peroxidase family. Classical plant (class III) peroxidase subfamily. The cofactor is Ca(2+). Heme b serves as cofactor. In terms of tissue distribution, highly expressed in suspension cultured cells and calli. Weak expression also found in the stems of intact plants. No expression in leaf, tuberous root and non-tuberous root.

It localises to the secreted. It catalyses the reaction 2 a phenolic donor + H2O2 = 2 a phenolic radical donor + 2 H2O. Functionally, removal of H(2)O(2), oxidation of toxic reductants, biosynthesis and degradation of lignin, suberization, auxin catabolism, response to environmental stresses such as wounding, pathogen attack and oxidative stress. These functions might be dependent on each isozyme/isoform in each plant tissue. May contribute to protection against cold-induced oxidative stress. This chain is Anionic peroxidase, found in Ipomoea batatas (Sweet potato).